Here is a 423-residue protein sequence, read N- to C-terminus: Kynureninase (423 aa).

Residues L105, S106, 133 to 136, D218, H221, and Y243 each bind pyridoxal 5'-phosphate; that span reads FPSD. At K244 the chain carries N6-(pyridoxal phosphate)lysine. The pyridoxal 5'-phosphate site is built by W273 and N301.

Belongs to the kynureninase family. In terms of assembly, homodimer. Pyridoxal 5'-phosphate serves as cofactor.

The catalysed reaction is L-kynurenine + H2O = anthranilate + L-alanine + H(+). It catalyses the reaction 3-hydroxy-L-kynurenine + H2O = 3-hydroxyanthranilate + L-alanine + H(+). The protein operates within amino-acid degradation; L-kynurenine degradation; L-alanine and anthranilate from L-kynurenine: step 1/1. It participates in cofactor biosynthesis; NAD(+) biosynthesis; quinolinate from L-kynurenine: step 2/3. Functionally, catalyzes the cleavage of L-kynurenine (L-Kyn) and L-3-hydroxykynurenine (L-3OHKyn) into anthranilic acid (AA) and 3-hydroxyanthranilic acid (3-OHAA), respectively. This Xanthomonas oryzae pv. oryzae (strain PXO99A) protein is Kynureninase.